Consider the following 272-residue polypeptide: Phosphatidylglycerol--prolipoprotein diacylglyceryl transferase (272 aa).

Helical transmembrane passes span 19–39, 58–78, and 94–114; these read ISIRWYGLMYVIGFFATYFLV, LNTVLILCVILGGRLGYVVFY, and WHGGMSFHGACIALILGGLIF. Arg141 provides a ligand contact to a 1,2-diacyl-sn-glycero-3-phospho-(1'-sn-glycerol). 2 helical membrane-spanning segments follow: residues 207–227 and 234–254; these read GTILSLFLCLYGLFRIIIENF and LGFIVAHITMGQLLSGAMILC.

The protein belongs to the Lgt family.

The protein localises to the cell inner membrane. The catalysed reaction is L-cysteinyl-[prolipoprotein] + a 1,2-diacyl-sn-glycero-3-phospho-(1'-sn-glycerol) = an S-1,2-diacyl-sn-glyceryl-L-cysteinyl-[prolipoprotein] + sn-glycerol 1-phosphate + H(+). It participates in protein modification; lipoprotein biosynthesis (diacylglyceryl transfer). Its function is as follows. Catalyzes the transfer of the diacylglyceryl group from phosphatidylglycerol to the sulfhydryl group of the N-terminal cysteine of a prolipoprotein, the first step in the formation of mature lipoproteins. This Desulfotalea psychrophila (strain LSv54 / DSM 12343) protein is Phosphatidylglycerol--prolipoprotein diacylglyceryl transferase.